We begin with the raw amino-acid sequence, 217 residues long: Uracil phosphoribosyltransferase (217 aa).

5-phospho-alpha-D-ribose 1-diphosphate-binding positions include arginine 84, arginine 109, and 137 to 145 (DPMLATGGS). Uracil is bound by residues isoleucine 202 and 207-209 (GDA). Aspartate 208 is a binding site for 5-phospho-alpha-D-ribose 1-diphosphate.

It belongs to the UPRTase family. Mg(2+) serves as cofactor.

The enzyme catalyses UMP + diphosphate = 5-phospho-alpha-D-ribose 1-diphosphate + uracil. It participates in pyrimidine metabolism; UMP biosynthesis via salvage pathway; UMP from uracil: step 1/1. With respect to regulation, allosterically activated by GTP. Functionally, catalyzes the conversion of uracil and 5-phospho-alpha-D-ribose 1-diphosphate (PRPP) to UMP and diphosphate. In Synechococcus elongatus (strain ATCC 33912 / PCC 7942 / FACHB-805) (Anacystis nidulans R2), this protein is Uracil phosphoribosyltransferase.